The following is a 367-amino-acid chain: MESLFPAPFWEVLYGSHFQGNLSLLNETVPHHLLLNASHSAFLPLGLKVTIVGLYLAVCIGGLLGNCLVMYVILRHTKMKTATNIYIFNLALADTLVLLTLPFQGTDILLGFWPFGNALCKTVIAIDYYNMFTSTFTLTAMSVDRYVAICHPIRALDVRTSSKAQAVNVAIWALASVVGVPVAIMGSAQVEDEEIECLVEIPAPQDYWGPVFAICIFLFSFIIPVLIISVCYSLMIRRLRGVRLLSGSREKDRNLRRITRLVLVVVAVFVGCWTPVQVFVLVQGLGVQPGSETAVAILRFCTALGYVNSCLNPILYAFLDENFKACFRKFCCASALHREMQVSDRVRSIAKDVGLGCKTSETVPRPA.

The Extracellular segment spans residues 1-45 (MESLFPAPFWEVLYGSHFQGNLSLLNETVPHHLLLNASHSAFLPL). 3 N-linked (GlcNAc...) asparagine glycosylation sites follow: N21, N26, and N36. A helical membrane pass occupies residues 46–71 (GLKVTIVGLYLAVCIGGLLGNCLVMY). The Cytoplasmic segment spans residues 72–84 (VILRHTKMKTATN). A helical transmembrane segment spans residues 85 to 106 (IYIFNLALADTLVLLTLPFQGT). The Extracellular portion of the chain corresponds to 107–121 (DILLGFWPFGNALCK). A disulfide bridge connects residues C120 and C197. Residues 122 to 143 (TVIAIDYYNMFTSTFTLTAMSV) traverse the membrane as a helical segment. At 144–162 (DRYVAICHPIRALDVRTSS) the chain is on the cytoplasmic side. The chain crosses the membrane as a helical span at residues 163-185 (KAQAVNVAIWALASVVGVPVAIM). At 186 to 208 (GSAQVEDEEIECLVEIPAPQDYW) the chain is on the extracellular side. A helical membrane pass occupies residues 209-233 (GPVFAICIFLFSFIIPVLIISVCYS). Residues 234–261 (LMIRRLRGVRLLSGSREKDRNLRRITRL) are Cytoplasmic-facing. Residues 262-282 (VLVVVAVFVGCWTPVQVFVLV) form a helical membrane-spanning segment. Topologically, residues 283–297 (QGLGVQPGSETAVAI) are extracellular. Residues 298–319 (LRFCTALGYVNSCLNPILYAFL) form a helical membrane-spanning segment. Residues 320-367 (DENFKACFRKFCCASALHREMQVSDRVRSIAKDVGLGCKTSETVPRPA) are Cytoplasmic-facing. C331 is lipidated: S-palmitoyl cysteine.

The protein belongs to the G-protein coupled receptor 1 family. In terms of processing, phosphorylation at Ser-360 requires GRK3. In terms of tissue distribution, in the brain, isoform KOR3 and isoform KOR3C are most abundant in hypothalamus and periaqueductal gray. Isoform KOR3A is highly expressed in cortex, striatum and brainstem. Isoform KOR3D is highly expressed in cerebellum, hypothalamus and brainstem. Detected in spleen lymphocytes.

Its subcellular location is the cell membrane. The protein localises to the cytoplasmic vesicle. G-protein coupled opioid receptor that functions as a receptor for the endogenous neuropeptide nociceptin. Ligand binding causes a conformation change that triggers signaling via guanine nucleotide-binding proteins (G proteins) and modulates the activity of down-stream effectors. Signaling via G proteins mediates inhibition of adenylate cyclase activity and calcium channel activity. Arrestins modulate signaling via G proteins and mediate the activation of alternative signaling pathways that lead to the activation of MAP kinases. Plays a role in modulating nociception and the perception of pain. Plays a role in the regulation of locomotor activity by the neuropeptide nociceptin. This chain is Nociceptin receptor (Oprl1), found in Mus musculus (Mouse).